Here is a 249-residue protein sequence, read N- to C-terminus: Flavodoxin/ferredoxin--NADP reductase (249 aa).

An FAD-binding FR-type domain is found at 2-102; that stretch reads NTWITAKIIK…KKSYGFFTLN (101 aa). Residues 51 to 54, Tyr67, 75 to 77, and Thr117 contribute to the FAD site; these read RAYS and QLT. NADP(+) is bound by residues 144 to 145, 174 to 175, Arg185, and 215 to 217; these read VR, SR, and NPD. 248–249 is an FAD binding site; that stretch reads YW.

This sequence belongs to the ferredoxin--NADP reductase type 1 family. FAD is required as a cofactor.

It localises to the cytoplasm. The enzyme catalyses 2 reduced [2Fe-2S]-[ferredoxin] + NADP(+) + H(+) = 2 oxidized [2Fe-2S]-[ferredoxin] + NADPH. It catalyses the reaction reduced [flavodoxin] + NADP(+) = oxidized [flavodoxin] + NADPH + 2 H(+). Transports electrons between flavodoxin or ferredoxin and NADPH. This Buchnera aphidicola subsp. Baizongia pistaciae (strain Bp) protein is Flavodoxin/ferredoxin--NADP reductase (fpr).